The chain runs to 179 residues: ATP synthase subunit delta (179 aa).

Belongs to the ATPase delta chain family. As to quaternary structure, F-type ATPases have 2 components, F(1) - the catalytic core - and F(0) - the membrane proton channel. F(1) has five subunits: alpha(3), beta(3), gamma(1), delta(1), epsilon(1). F(0) has three main subunits: a(1), b(2) and c(10-14). The alpha and beta chains form an alternating ring which encloses part of the gamma chain. F(1) is attached to F(0) by a central stalk formed by the gamma and epsilon chains, while a peripheral stalk is formed by the delta and b chains.

Its subcellular location is the cell inner membrane. In terms of biological role, f(1)F(0) ATP synthase produces ATP from ADP in the presence of a proton or sodium gradient. F-type ATPases consist of two structural domains, F(1) containing the extramembraneous catalytic core and F(0) containing the membrane proton channel, linked together by a central stalk and a peripheral stalk. During catalysis, ATP synthesis in the catalytic domain of F(1) is coupled via a rotary mechanism of the central stalk subunits to proton translocation. This protein is part of the stalk that links CF(0) to CF(1). It either transmits conformational changes from CF(0) to CF(1) or is implicated in proton conduction. This Burkholderia mallei (strain SAVP1) protein is ATP synthase subunit delta.